The chain runs to 183 residues: Small ribosomal subunit protein uS4 (183 aa).

An S4 RNA-binding domain is found at Arg106–His168. The interval Asn158–Glu183 is disordered. The span at Asp165 to Glu183 shows a compositional bias: basic and acidic residues.

The protein belongs to the universal ribosomal protein uS4 family. Part of the 30S ribosomal subunit. Contacts protein S5. The interaction surface between S4 and S5 is involved in control of translational fidelity.

Functionally, one of the primary rRNA binding proteins, it binds directly to 16S rRNA where it nucleates assembly of the body of the 30S subunit. With S5 and S12 plays an important role in translational accuracy. The sequence is that of Small ribosomal subunit protein uS4 from Picrophilus torridus (strain ATCC 700027 / DSM 9790 / JCM 10055 / NBRC 100828 / KAW 2/3).